We begin with the raw amino-acid sequence, 913 residues long: MSLSQNAIFKSQTGEENLMSSNHRDSESITDVCSNEDLPEVELVNLLEEQLPQYKLRVDSLFLYENQDWSQSSHQQQDASETLSPVLAEETFRYMILGTDRVEQMTKTYNDIDMVTHLLAERDRDLELAARIGQALLKRNHVLSEQNESLEEQLGQAFDQVNQLQHELSKKEELLRIVSIASEESETDSSCSTPLRFNESFSLSQGLLQLDMMHEKLKELEEENMALRSKACHIKTETFTYEEKEQKLINDCVNELRETNAQMSRMTEELSGKSDELLRYQEEISSLLSQIVDLQHKLKEHVIEKEELRLHLQASKDAQRQLTMELHELQDRNMECLGMLHESQEEIKELRNKAGPSAHLCFSQAYGVFAGESLAAEIEGTMRKKLSLDEESVFKQKAQQKRVFDTVKVANDTRGRSVTFPVLLPIPGSNRSSVIMTAKPFESGVQQTEDKTLPNQGSSTEVPGNSHPRDPPGLPEDSDLATALHRLSLRRQNYLSEKQFFAEEWERKLQILAEQEEEVSSCEALTENLASFCTDQSETTELGSAGCLRGFMPEKLQIVKPLEGSQTLHHWQQLAQPNLGTILDPRPGVITKGFTQMPKDAVYHISDLEEDEEVGITFQVQQPLQLEQKPAPPPPVTGIFLPPMTSAGGPVSVATSNPGKCLSFTNSTFTFTTCRILHPSDITQVTPSSGFPSLSCGSSAGSASNTAVNSPAASYRLSIGESITNRRDSTITFSSTRSLAKLLQERGISAKVYHSPASENPLLQLRPKALATPSTPPNSPSQSPCSSPVPFEPRVHVSENFLASRPAETFLQEMYGLRPSRAPPDVGQLKMNLVDRLKRLGIARVVKTPVPRENGKSREAEMGLQKPDSAVYLNSGGSLLGGLRRNQSLPVMMGSFGAPVCTTSPKMGILKED.

The span at 11–21 (SQTGEENLMSS) shows a compositional bias: polar residues. The tract at residues 11–31 (SQTGEENLMSSNHRDSESITD) is disordered. The HAP1 N-terminal domain occupies 48–353 (EEQLPQYKLR…QEEIKELRNK (306 aa)). A coiled-coil region spans residues 134-355 (QALLKRNHVL…EIKELRNKAG (222 aa)). The interaction with HGS stretch occupies residues 359–507 (HLCFSQAYGV…KQFFAEEWER (149 aa)). The interval 442–478 (ESGVQQTEDKTLPNQGSSTEVPGNSHPRDPPGLPEDS) is disordered. The span at 453 to 463 (LPNQGSSTEVP) shows a compositional bias: polar residues. The stretch at 502–519 (AEEWERKLQILAEQEEEV) forms a coiled coil. Low complexity-rich tracts occupy residues 688–704 (SSGFPSLSCGSSAGSAS) and 780–789 (PSQSPCSSPV). Disordered regions lie at residues 688–707 (SSGFPSLSCGSSAGSASNTA) and 769–790 (ALATPSTPPNSPSQSPCSSPVP).

The protein belongs to the milton family. In terms of assembly, interacts with RHOT1/Miro-1 and RHOT2/Miro-2. Interacts with GABA-A receptor and O-GlcNAc transferase. Interacts with HGS. O-glycosylated. Present in heart and brain (at protein level).

Its subcellular location is the cytoplasm. It localises to the early endosome. The protein resides in the mitochondrion. May regulate endosome-to-lysosome trafficking of membrane cargo, including EGFR. In Rattus norvegicus (Rat), this protein is Trafficking kinesin-binding protein 2 (Trak2).